We begin with the raw amino-acid sequence, 553 residues long: HTH-type transcriptional regulator SgrR (553 aa).

The HTH marR-type domain occupies 1 to 117; sequence MSTARLQQQF…LSQLGRSFRQ (117 aa). The segment at residues 26 to 49 is a DNA-binding region (H-T-H motif); sequence LQELAEVLCCSRRHVRSLLGSMQQ. The solute-binding stretch occupies residues 163–494; the sequence is ELEPDLSHHW…EELHQDVELW (332 aa).

Its function is as follows. Activates the small RNA gene sgrS under glucose-phosphate stress conditions as well as yfdZ. Represses its own transcription under both stress and non-stress conditions. Might act as a sensor of the intracellular accumulation of phosphoglucose by binding these molecules in its C-terminal solute-binding domain. The polypeptide is HTH-type transcriptional regulator SgrR (Yersinia enterocolitica serotype O:8 / biotype 1B (strain NCTC 13174 / 8081)).